We begin with the raw amino-acid sequence, 280 residues long: RAD52 motif-containing protein 1 (280 aa).

The 84-residue stretch at 18 to 101 folds into the RRM domain; the sequence is KTIFIWDIQP…SPLKVRLSTK (84 aa).

As to quaternary structure, homodimer.

The protein resides in the nucleus. The protein localises to the cytoplasm. It localises to the nucleolus. Functionally, may confer resistance to the antitumor agent cisplatin. Binds to DNA and RNA. In Danio rerio (Zebrafish), this protein is RAD52 motif-containing protein 1 (rdm1).